The chain runs to 118 residues: Holo-[acyl-carrier-protein] synthase (118 aa).

Mg(2+) is bound by residues Asp-8 and Glu-58.

It belongs to the P-Pant transferase superfamily. AcpS family. Requires Mg(2+) as cofactor.

It localises to the cytoplasm. The enzyme catalyses apo-[ACP] + CoA = holo-[ACP] + adenosine 3',5'-bisphosphate + H(+). In terms of biological role, transfers the 4'-phosphopantetheine moiety from coenzyme A to a Ser of acyl-carrier-protein. The chain is Holo-[acyl-carrier-protein] synthase from Streptococcus equi subsp. zooepidemicus (strain MGCS10565).